Consider the following 454-residue polypeptide: Protein disulfide-isomerase TMX3 (454 aa).

The signal sequence occupies residues 1 to 24 (MAAWKSWTALRLCATVVVLDMVVC). One can recognise a Thioredoxin domain in the interval 25–128 (KGFVEDLDES…KDDIIEFAHR (104 aa)). Residues 25 to 375 (KGFVEDLDES…TIVSIFKSSP (351 aa)) lie on the Lumenal side of the membrane. Active-site nucleophile residues include Cys53 and Cys56. A disulfide bridge connects residues Cys53 and Cys56. 2 N-linked (GlcNAc...) asparagine glycosylation sites follow: Asn258 and Asn313. A helical membrane pass occupies residues 376–396 (LMGCFLFGLPLGVISIMCYGI). Over 397–454 (YTADTDGGYIEERYEVSKSENENQEQIEESKEQQEPSSGGSVVPTVQEPKDVLEKKKD) the chain is Cytoplasmic. Residues 412-454 (VSKSENENQEQIEESKEQQEPSSGGSVVPTVQEPKDVLEKKKD) form a disordered region. Residues 444–454 (EPKDVLEKKKD) show a composition bias toward basic and acidic residues. Residues 451-454 (KKKD) carry the Di-lysine motif motif.

The protein belongs to the protein disulfide isomerase family. Post-translationally, N-glycosylated. In terms of tissue distribution, widely expressed. Expressed in brain, testis, lung, skin, kidney, uterus, bone, stomach, liver, prostate, placenta, eye and muscle.

Its subcellular location is the endoplasmic reticulum membrane. The catalysed reaction is Catalyzes the rearrangement of -S-S- bonds in proteins.. Its function is as follows. Probable disulfide isomerase, which participates in the folding of proteins containing disulfide bonds. May act as a dithiol oxidase. Acts as a regulator of endoplasmic reticulum-mitochondria contact sites via its ability to regulate redox signals. The chain is Protein disulfide-isomerase TMX3 (TMX3) from Homo sapiens (Human).